Here is a 194-residue protein sequence, read N- to C-terminus: Cysteine and glycine-rich protein 2 (194 aa).

The LIM zinc-binding 1 domain occupies 10-61 (CGACGRTVYHAEEVQCDGRSFHRCCFLCMVCRKNLDSTTVAIHDAEVYCKSC). The short motif at 64-69 (KKYGPK) is the Nuclear localization signal element. Positions 85–110 (GERLGIKPESSPSPHRPTTNPNTSKF) are disordered. Residues 94–110 (SSPSPHRPTTNPNTSKF) are compositionally biased toward polar residues. One can recognise an LIM zinc-binding 2 domain in the interval 120–171 (CSRCGDSVYAAEKVIGAGKPWHKNCFRCAKCGKSLESTTLTEKEGEIYCKGC).

The protein localises to the nucleus. In terms of biological role, interacts with zyxin. May be a component of a signal transduction pathway that mediates adhesion-stimulated changes in gene expression. Totally down-regulated in transformed cells. This Coturnix japonica (Japanese quail) protein is Cysteine and glycine-rich protein 2 (CSRP2).